Reading from the N-terminus, the 355-residue chain is Putative early 40.3 kDa protein (355 aa).

In terms of biological role, this protein is required for viral late gene expression. This Orgyia pseudotsugata multicapsid polyhedrosis virus (OpMNPV) protein is Putative early 40.3 kDa protein (DA41).